The primary structure comprises 184 residues: Probable sensory rhodopsin transducer (184 aa).

Transmembrane regions (helical) follow at residues 14-34 and 52-72; these read TLGVGAVLVLVLATLAVVNVY and GLVSILLIVAVALLFVATIIG. Residues 73–125 form the HAMP domain; sequence RERTAAVETLAAQARQIEQGELDVDLATNRTDDVGDIYRALAVLRDSEQLDRQ.

Belongs to the methyl-accepting chemotaxis (MCP) protein family. Interacts with Xop2/SRM.

The protein localises to the membrane. In terms of biological role, the HtrM-Xop2/SRM complex may interact with CheB or CheR and modulate their availability to Sop1 or Sop2. The protein is Probable sensory rhodopsin transducer (htrM) of Haloarcula marismortui (strain ATCC 43049 / DSM 3752 / JCM 8966 / VKM B-1809) (Halobacterium marismortui).